We begin with the raw amino-acid sequence, 253 residues long: Triosephosphate isomerase (253 aa).

12-14 (NWK) lines the substrate pocket. His-100 functions as the Electrophile in the catalytic mechanism. Glu-170 acts as the Proton acceptor in catalysis. Substrate contacts are provided by residues Gly-176, Ser-215, and 236-237 (GG).

Belongs to the triosephosphate isomerase family. As to quaternary structure, homodimer.

It is found in the cytoplasm. The enzyme catalyses D-glyceraldehyde 3-phosphate = dihydroxyacetone phosphate. The protein operates within carbohydrate biosynthesis; gluconeogenesis. Its pathway is carbohydrate degradation; glycolysis; D-glyceraldehyde 3-phosphate from glycerone phosphate: step 1/1. Its function is as follows. Involved in the gluconeogenesis. Catalyzes stereospecifically the conversion of dihydroxyacetone phosphate (DHAP) to D-glyceraldehyde-3-phosphate (G3P). This chain is Triosephosphate isomerase, found in Rhodopseudomonas palustris (strain BisA53).